A 183-amino-acid chain; its full sequence is Glutathione-regulated potassium-efflux system ancillary protein KefG (183 aa).

The protein belongs to the NAD(P)H dehydrogenase (quinone) family. KefG subfamily. As to quaternary structure, interacts with KefB.

The protein localises to the cell inner membrane. It catalyses the reaction a quinone + NADH + H(+) = a quinol + NAD(+). The enzyme catalyses a quinone + NADPH + H(+) = a quinol + NADP(+). Functionally, regulatory subunit of a potassium efflux system that confers protection against electrophiles. Required for full activity of KefB. The chain is Glutathione-regulated potassium-efflux system ancillary protein KefG from Serratia proteamaculans (strain 568).